A 135-amino-acid chain; its full sequence is CDGSH iron-sulfur domain-containing protein 2A (135 aa).

Residues 1-37 (MVLESIARVIKVQLPAYLKRLPIPDSIAGFIRLTVSE) lie on the Lumenal side of the membrane. A helical membrane pass occupies residues 38–60 (WLRLLPFLGVLALLGYLAIRPFL). The Cytoplasmic segment spans residues 61–135 (LKKKQQKDSL…GPLILKKKEV (75 aa)). The [2Fe-2S] cluster site is built by Cys-99, Cys-101, Cys-110, and His-114.

The protein belongs to the CISD protein family. CISD2 subfamily. In terms of assembly, homodimer. Requires [2Fe-2S] cluster as cofactor.

It localises to the endoplasmic reticulum membrane. The protein resides in the mitochondrion outer membrane. In terms of biological role, regulator of autophagy that contributes to antagonize becn1-mediated cellular autophagy at the endoplasmic reticulum. Participates in the interaction of bcl2 with becn1 and is required for bcl2-mediated depression of endoplasmic reticulum Ca(2+) stores during autophagy. In Xenopus laevis (African clawed frog), this protein is CDGSH iron-sulfur domain-containing protein 2A (cisd2-a).